The sequence spans 184 residues: UPF0398 protein BC_1561 (184 aa).

Belongs to the UPF0398 family.

The chain is UPF0398 protein BC_1561 from Bacillus cereus (strain ATCC 14579 / DSM 31 / CCUG 7414 / JCM 2152 / NBRC 15305 / NCIMB 9373 / NCTC 2599 / NRRL B-3711).